A 325-amino-acid polypeptide reads, in one-letter code: UDP-N-acetylglucosamine transporter ROCK1 (325 aa).

The Cytoplasmic portion of the chain corresponds to 1 to 13 (MATANGAKSPSSM). A helical transmembrane segment spans residues 14–34 (GPKVLFYSILLTLQYGAQPLI). Residues 35 to 42 (SKRCIRKD) lie on the Lumenal side of the membrane. A helical membrane pass occupies residues 43–63 (VIVTSSVLTCEIVKVICALIL). The Cytoplasmic portion of the chain corresponds to 64–109 (MARNGSLKGLAKEWTLMGSLTASGLPAAIYALQNSLLQISYRSLDS). Residues 110-130 (LTFSILNQTKIFFTAFFTFII) traverse the membrane as a helical segment. Topologically, residues 131-135 (LRQKQ) are lumenal. Residues 136 to 156 (SILQIGALCLLIMAAVLLSVG) traverse the membrane as a helical segment. The Cytoplasmic segment spans residues 157 to 171 (EGSNKDSSGINADQK). The chain crosses the membrane as a helical span at residues 172-192 (LFYGIIPVLAASVLSGLASSL). The Lumenal segment spans residues 193-203 (CQWASQVKKHS). The helical transmembrane segment at 204 to 224 (SYLMTVEMSIVGSLCLLVSTL) threads the bilayer. At 225 to 241 (KSPDGEAIKKYGFFHGW) the chain is on the cytoplasmic side. A helical transmembrane segment spans residues 242-262 (TALTLVPVISNALGGILVGLV). Over 263–270 (TSHAGGVR) the chain is Lumenal. A helical transmembrane segment spans residues 271–291 (KGFVIVSALLVTALLQFAFEG). Residues 292–325 (KPPSSYCLVALPLVMSSISMYQKYPYIDKKKKKV) are Cytoplasmic-facing.

This sequence belongs to the nucleotide-sugar transporter family. CMP-Sialate:CMP antiporter (TC 2.A.7.12) subfamily. In terms of tissue distribution, expressed in roots, cotyledons, leaves, stems, flowers and siliques.

It localises to the endoplasmic reticulum membrane. In terms of biological role, mediates the transport of UDP-linked acetylated hexosamines across the endoplasmic reticulum (ER) membrane. Facilitates UDP-N-acetylglucosamine (UDP-GlcNAc) and UDP-N-acetylgalactosamine (UDP-GalNAc) transport. Regulates the cytokinin signal in meristematic cells through modulating activity of cytokinin oxidases/dehydrogenases. Part of the ER quality control system, which determines the fate of aberrant proteins in the secretory pathway. The chain is UDP-N-acetylglucosamine transporter ROCK1 from Arabidopsis thaliana (Mouse-ear cress).